The sequence spans 429 residues: Enolase (429 aa).

Residue Q167 coordinates (2R)-2-phosphoglycerate. The active-site Proton donor is E209. Residues D246, E289, and D316 each contribute to the Mg(2+) site. Positions 341, 370, 371, and 392 each coordinate (2R)-2-phosphoglycerate. The Proton acceptor role is filled by K341.

Belongs to the enolase family. As to quaternary structure, component of the RNA degradosome, a multiprotein complex involved in RNA processing and mRNA degradation. Requires Mg(2+) as cofactor.

The protein localises to the cytoplasm. It localises to the secreted. Its subcellular location is the cell surface. It catalyses the reaction (2R)-2-phosphoglycerate = phosphoenolpyruvate + H2O. The protein operates within carbohydrate degradation; glycolysis; pyruvate from D-glyceraldehyde 3-phosphate: step 4/5. Catalyzes the reversible conversion of 2-phosphoglycerate (2-PG) into phosphoenolpyruvate (PEP). It is essential for the degradation of carbohydrates via glycolysis. This is Enolase from Pseudomonas putida (strain ATCC 47054 / DSM 6125 / CFBP 8728 / NCIMB 11950 / KT2440).